Reading from the N-terminus, the 417-residue chain is Chaperone SurA (417 aa).

A signal peptide spans 1-12 (MGAALLCSFAHA). PpiC domains are found at residues 163 to 264 (SEEY…KLEE) and 273 to 372 (RDEV…QVLG).

The protein resides in the periplasm. The catalysed reaction is [protein]-peptidylproline (omega=180) = [protein]-peptidylproline (omega=0). Chaperone involved in the correct folding and assembly of outer membrane proteins. Recognizes specific patterns of aromatic residues and the orientation of their side chains, which are found more frequently in integral outer membrane proteins. May act in both early periplasmic and late outer membrane-associated steps of protein maturation. In Pseudomonas aeruginosa (strain ATCC 15692 / DSM 22644 / CIP 104116 / JCM 14847 / LMG 12228 / 1C / PRS 101 / PAO1), this protein is Chaperone SurA.